A 306-amino-acid chain; its full sequence is Mitochondrial brown fat uncoupling protein 1 (306 aa).

Residues 1 to 10 (MVGTTTTDVP) lie on the Mitochondrial intermembrane side of the membrane. The helical transmembrane segment at 11–32 (PTMGVKIFSAGVAACLADVITF) threads the bilayer. Solcar repeat units lie at residues 11-102 (PTMG…VQEF), 110-200 (PSLG…MKGA), and 209-294 (DDVP…LKGE). Residues 33 to 73 (PLDTAKVRQQIQGEFPITSGIRYKGVLGTITTLAKTEGPLK) lie on the Mitochondrial matrix side of the membrane. K56 is a binding site for fatty acid 16:0. A helical transmembrane segment spans residues 74-96 (LYSGLPAGLQRQISFASLRIGLY). Residues 97 to 115 (DTVQEFFTSGEETPSLGSK) are Mitochondrial intermembrane-facing. A helical transmembrane segment spans residues 116-132 (ISAGLTTGGVAVFIGQP). Over 133–177 (TEVVKVRLQAQSHLHGLKPRYTGTYNAYRIIATTESLTSLWKGTT) the chain is Mitochondrial matrix. A helical membrane pass occupies residues 178-194 (PNLLRNVIINCTELVTY). Topologically, residues 195 to 211 (DLMKGALVRNEILADDV) are mitochondrial intermembrane. Residues 212–231 (PCHFVSALIAGFCTTLLSSP) form a helical membrane-spanning segment. The Mitochondrial matrix portion of the chain corresponds to 232 to 265 (VDVVKTRFINSPPGQYASVPNCAMTMFTKEGPTA). A Cysteine sulfenic acid (-SOH) modification is found at C253. The chain crosses the membrane as a helical span at residues 266–288 (FFKGFVPSFLRLGSWNVIMFVCF). K268 contributes to the fatty acid 16:0 binding site. At 289–306 (EKLKGELMRSRQTVDCAT) the chain is on the mitochondrial intermembrane side.

This sequence belongs to the mitochondrial carrier (TC 2.A.29) family. Most probably functions as a monomer. Binds one purine nucleotide per monomer. However, has also been suggested to function as a homodimer or a homotetramer. Tightly associates with cardiolipin in the mitochondrion inner membrane; may stabilize and regulate its activity. In terms of processing, may undergo sulfenylation upon cold exposure. May increase the sensitivity of UCP1 thermogenic function to the activation by noradrenaline probably through structural effects. Post-translationally, may undergo ubiquitin-mediated proteasomal degradation. Brown adipose tissue.

It is found in the mitochondrion inner membrane. It carries out the reaction H(+)(in) = H(+)(out). Has no constitutive proton transporter activity and has to be activated by long-chain fatty acids/LCFAs. Inhibited by purine nucleotides. Both purine nucleotides and LCFAs bind the cytosolic side of the transporter and directly compete to activate or inhibit it. Activated by noradrenaline and reactive oxygen species. Despite lacking canonical translational encoding for selenocysteine, a small pool of the protein has been observed to selectively incorporate selenocysteine at 'Cys-253'. Selenocysteine-modified protein is highly sensitive to redox modification and may constitute a pool of protein highly sensitive to activation by elevated levels of reactive oxygen species (ROS). Its function is as follows. Mitochondrial protein responsible for thermogenic respiration, a specialized capacity of brown adipose tissue and beige fat that participates in non-shivering adaptive thermogenesis to temperature and diet variations and more generally to the regulation of energy balance. Functions as a long-chain fatty acid/LCFA and proton symporter, simultaneously transporting one LCFA and one proton through the inner mitochondrial membrane. However, LCFAs remaining associated with the transporter via their hydrophobic tails, it results in an apparent transport of protons activated by LCFAs. Thereby, dissipates the mitochondrial proton gradient and converts the energy of substrate oxydation into heat instead of ATP. Regulates the production of reactive oxygen species/ROS by mitochondria. The protein is Mitochondrial brown fat uncoupling protein 1 of Oryctolagus cuniculus (Rabbit).